Consider the following 357-residue polypeptide: Trans-acting factor B (357 aa).

The tract at residues 226-257 is disordered; that stretch reads DDNDLEEEERNASGEQTTTAREESEALDTTSN.

Plasmid partition require REP1, REP2, and a cis-acting DNA sequence (known as STB). REP1 may act by intercalating in the yeast nuclear matrix and binding STB either directly or via REP2. The chain is Trans-acting factor B (B) from Zygosaccharomyces bailii.